We begin with the raw amino-acid sequence, 564 residues long: Glutamate--tRNA ligase (564 aa).

The short motif at 107-117 is the 'HIGH' region element; it reads PNPNGPPTLGS.

The protein belongs to the class-I aminoacyl-tRNA synthetase family. Glutamate--tRNA ligase type 2 subfamily.

The protein localises to the cytoplasm. It catalyses the reaction tRNA(Glu) + L-glutamate + ATP = L-glutamyl-tRNA(Glu) + AMP + diphosphate. Its function is as follows. Catalyzes the attachment of glutamate to tRNA(Glu) in a two-step reaction: glutamate is first activated by ATP to form Glu-AMP and then transferred to the acceptor end of tRNA(Glu). This Methanothrix thermoacetophila (strain DSM 6194 / JCM 14653 / NBRC 101360 / PT) (Methanosaeta thermophila) protein is Glutamate--tRNA ligase.